The chain runs to 837 residues: Autophagy-related protein 13 (837 aa).

A compositionally biased stretch (basic and acidic residues) spans 302 to 336; the sequence is LKIDRDSTTNEKVNEPEDDESHHADVESSQEHLQS. 4 disordered regions span residues 302–400, 446–540, 631–704, and 793–837; these read LKID…QRPT, RNPR…MNDT, QLSG…TNSN, and ANAP…LAKH. The segment covering 358–400 has biased composition (polar residues); sequence SISNNASMSLSPCSSGPQTVTEDSPSHNKPSANTTPIVSQRPT. Low complexity predominate over residues 450–475; that stretch reads SSTSSTNTTANIPIANNNSNNQYNST. Residues 476–486 show a composition bias toward polar residues; it reads FPRSVSSSHGS. A compositionally biased stretch (low complexity) spans 509–523; it reads RFSSSFGSRASRRFS. Polar residues-rich tracts occupy residues 524-538, 658-680, 688-704, and 796-812; these read NTSG…GNMN, YDNS…SGND, GTPS…TNSN, and PKSN…TNPP. Positions 815-825 are enriched in acidic residues; sequence GEDDDDDDDDL.

The protein belongs to the ATG13 family. Fungi subfamily. Interacts with ATG1 to form the ATG1-ATG13 kinase complex.

It is found in the cytoplasm. The protein localises to the preautophagosomal structure. In terms of biological role, activates the ATG1 kinase in a nutritional condition dependent manner through the TOR pathway, leading to autophagy. Also involved in cytoplasm to vacuole transport (Cvt) and more specifically in Cvt vesicle formation. Seems to play a role in the switching machinery regulating the conversion between the Cvt pathway and autophagy. Finally, ATG13 is also required for glycogen storage during stationary phase. This Debaryomyces hansenii (strain ATCC 36239 / CBS 767 / BCRC 21394 / JCM 1990 / NBRC 0083 / IGC 2968) (Yeast) protein is Autophagy-related protein 13 (ATG13).